The chain runs to 143 residues: Large ribosomal subunit protein uL16 (143 aa).

This sequence belongs to the universal ribosomal protein uL16 family. As to quaternary structure, part of the 50S ribosomal subunit.

Functionally, binds 23S rRNA and is also seen to make contacts with the A and possibly P site tRNAs. This is Large ribosomal subunit protein uL16 from Fusobacterium nucleatum subsp. nucleatum (strain ATCC 25586 / DSM 15643 / BCRC 10681 / CIP 101130 / JCM 8532 / KCTC 2640 / LMG 13131 / VPI 4355).